The sequence spans 65 residues: Large ribosomal subunit protein bL35 (65 aa).

The disordered stretch occupies residues 1–26; it reads MPKIKTVRGAAKRFKKTASGGFKRKQ. Residues 10–26 are compositionally biased toward basic residues; the sequence is AAKRFKKTASGGFKRKQ.

The protein belongs to the bacterial ribosomal protein bL35 family.

The protein is Large ribosomal subunit protein bL35 of Actinobacillus pleuropneumoniae serotype 7 (strain AP76).